The chain runs to 362 residues: Aminomethyltransferase (362 aa).

This sequence belongs to the GcvT family. The glycine cleavage system is composed of four proteins: P, T, L and H.

The catalysed reaction is N(6)-[(R)-S(8)-aminomethyldihydrolipoyl]-L-lysyl-[protein] + (6S)-5,6,7,8-tetrahydrofolate = N(6)-[(R)-dihydrolipoyl]-L-lysyl-[protein] + (6R)-5,10-methylene-5,6,7,8-tetrahydrofolate + NH4(+). Its function is as follows. The glycine cleavage system catalyzes the degradation of glycine. This chain is Aminomethyltransferase, found in Chromobacterium violaceum (strain ATCC 12472 / DSM 30191 / JCM 1249 / CCUG 213 / NBRC 12614 / NCIMB 9131 / NCTC 9757 / MK).